Reading from the N-terminus, the 623-residue chain is Kelch repeat and BTB domain-containing protein 12 (623 aa).

The BTB domain occupies 25–92 (TDVVLVAEGV…MYSSNLPLTA (68 aa)). The BACK domain occupies 127 to 236 (CLGIYYYARD…GVDYLKGTMK (110 aa)). Kelch repeat units follow at residues 390-440 (NLYL…RMKG), 441-496 (RLYV…ALNG), 498-551 (IYVL…ASNA), and 557-607 (KLYV…LVAN).

The protein is Kelch repeat and BTB domain-containing protein 12 (kbtbd12) of Danio rerio (Zebrafish).